The chain runs to 130 residues: Mediator of RNA polymerase II transcription subunit 31 (130 aa).

Belongs to the Mediator complex subunit 31 family. As to quaternary structure, component of the Mediator complex.

The protein resides in the nucleus. In terms of biological role, component of the Mediator complex, a coactivator involved in the regulated transcription of nearly all RNA polymerase II-dependent genes. Mediator functions as a bridge to convey information from gene-specific regulatory proteins to the basal RNA polymerase II transcription machinery. Mediator is recruited to promoters by direct interactions with regulatory proteins and serves as a scaffold for the assembly of a functional preinitiation complex with RNA polymerase II and the general transcription factors. This chain is Mediator of RNA polymerase II transcription subunit 31 (SOH1), found in Candida glabrata (strain ATCC 2001 / BCRC 20586 / JCM 3761 / NBRC 0622 / NRRL Y-65 / CBS 138) (Yeast).